A 148-amino-acid polypeptide reads, in one-letter code: Transcriptional regulator MraZ (148 aa).

2 SpoVT-AbrB domains span residues 5–53 and 82–125; these read ETAI…AEKE and SAVL…SEQA.

This sequence belongs to the MraZ family. As to quaternary structure, forms oligomers.

Its subcellular location is the cytoplasm. It is found in the nucleoid. This chain is Transcriptional regulator MraZ, found in Xanthomonas oryzae pv. oryzae (strain MAFF 311018).